We begin with the raw amino-acid sequence, 381 residues long: Homoserine O-acetyltransferase (381 aa).

The region spanning 47–359 is the AB hydrolase-1 domain; that stretch reads NAILICHALT…DKGHDAFLLD (313 aa). The active-site Nucleophile is the Ser153. Arg223 is a binding site for substrate. Catalysis depends on residues Asp320 and His353. Asp354 lines the substrate pocket.

It belongs to the AB hydrolase superfamily. MetX family. Homodimer.

The protein localises to the cytoplasm. The enzyme catalyses L-homoserine + acetyl-CoA = O-acetyl-L-homoserine + CoA. It participates in amino-acid biosynthesis; L-methionine biosynthesis via de novo pathway; O-acetyl-L-homoserine from L-homoserine: step 1/1. Functionally, transfers an acetyl group from acetyl-CoA to L-homoserine, forming acetyl-L-homoserine. This is Homoserine O-acetyltransferase from Acidiphilium cryptum (strain JF-5).